The following is a 605-amino-acid chain: DNA mismatch repair protein MutL (605 aa).

Belongs to the DNA mismatch repair MutL/HexB family.

Its function is as follows. This protein is involved in the repair of mismatches in DNA. It is required for dam-dependent methyl-directed DNA mismatch repair. May act as a 'molecular matchmaker', a protein that promotes the formation of a stable complex between two or more DNA-binding proteins in an ATP-dependent manner without itself being part of a final effector complex. The polypeptide is DNA mismatch repair protein MutL (Methylocella silvestris (strain DSM 15510 / CIP 108128 / LMG 27833 / NCIMB 13906 / BL2)).